The primary structure comprises 830 residues: Penicillin-binding protein 1A (830 aa).

Over residues 1 to 17 (MTERKREHKDRKQKKNS) the composition is skewed to basic residues. The interval 1 to 20 (MTERKREHKDRKQKKNSPKN) is disordered. The Cytoplasmic portion of the chain corresponds to 1 to 30 (MTERKREHKDRKQKKNSPKNQSKVTKFLKW). The chain crosses the membrane as a helical; Signal-anchor for type II membrane protein span at residues 31-51 (FFIGILLLGITAVTVVGIYVL). At 52–830 (SIIRSSPELD…QNGQNNNITQ (779 aa)) the chain is on the extracellular side. The interval 72-244 (SILYDDQGNF…PTSYDGLSEA (173 aa)) is transglycosylase. Catalysis depends on Glu111, which acts as the Proton donor; for transglycosylase activity. The interval 378-663 (ASATIIDYKT…TSPIFGKIMG (286 aa)) is transpeptidase. Residue Ser417 is the Acyl-ester intermediate; for transpeptidase activity of the active site. The disordered stretch occupies residues 731–830 (APDTNDNNNS…QNGQNNNITQ (100 aa)). Residues 735–746 (NDNNNSGANEGN) are compositionally biased toward low complexity. Positions 747-758 (KQQETKPEEVKP) are enriched in basic and acidic residues. Composition is skewed to low complexity over residues 759–807 (NENN…NTNN) and 816–830 (GNNQ…NITQ).

This sequence in the N-terminal section; belongs to the glycosyltransferase 51 family. In the C-terminal section; belongs to the transpeptidase family.

The protein resides in the cell membrane. The catalysed reaction is [GlcNAc-(1-&gt;4)-Mur2Ac(oyl-L-Ala-gamma-D-Glu-L-Lys-D-Ala-D-Ala)](n)-di-trans,octa-cis-undecaprenyl diphosphate + beta-D-GlcNAc-(1-&gt;4)-Mur2Ac(oyl-L-Ala-gamma-D-Glu-L-Lys-D-Ala-D-Ala)-di-trans,octa-cis-undecaprenyl diphosphate = [GlcNAc-(1-&gt;4)-Mur2Ac(oyl-L-Ala-gamma-D-Glu-L-Lys-D-Ala-D-Ala)](n+1)-di-trans,octa-cis-undecaprenyl diphosphate + di-trans,octa-cis-undecaprenyl diphosphate + H(+). It carries out the reaction Preferential cleavage: (Ac)2-L-Lys-D-Ala-|-D-Ala. Also transpeptidation of peptidyl-alanyl moieties that are N-acyl substituents of D-alanine.. It functions in the pathway cell wall biogenesis; peptidoglycan biosynthesis. Its function is as follows. Cell wall formation. Synthesis of cross-linked peptidoglycan from the lipid intermediates. The enzyme has a penicillin-insensitive transglycosylase N-terminal domain (formation of linear glycan strands) and a penicillin-sensitive transpeptidase C-terminal domain (cross-linking of the peptide subunits). This chain is Penicillin-binding protein 1A (pbpA), found in Clostridium perfringens (strain ATCC 13124 / DSM 756 / JCM 1290 / NCIMB 6125 / NCTC 8237 / Type A).